The following is a 431-amino-acid chain: Adenylosuccinate synthetase (431 aa).

GTP is bound by residues 12 to 18 and 40 to 42; these read GDEGKGK and GHS. The active-site Proton acceptor is Asp13. Residues Asp13 and Gly40 each coordinate Mg(2+). IMP contacts are provided by residues 13 to 16 and 38 to 41; these read DEGK and NAGH. The active-site Proton donor is His41. Residues 114 to 133 are disordered; that stretch reads QQQERDRSKNGEKIGTTNKG. The segment covering 115–125 has biased composition (basic and acidic residues); sequence QQERDRSKNGE. IMP-binding residues include Thr130, Arg144, Gln225, Thr240, and Arg304. Position 300–306 (300–306) interacts with substrate; it reads TVTKRPR. Residues Arg306, 332-334, and 414-416 each bind GTP; these read CLD and SIG.

Belongs to the adenylosuccinate synthetase family. In terms of assembly, homodimer. Mg(2+) is required as a cofactor.

Its subcellular location is the cytoplasm. It carries out the reaction IMP + L-aspartate + GTP = N(6)-(1,2-dicarboxyethyl)-AMP + GDP + phosphate + 2 H(+). The protein operates within purine metabolism; AMP biosynthesis via de novo pathway; AMP from IMP: step 1/2. Plays an important role in the de novo pathway of purine nucleotide biosynthesis. Catalyzes the first committed step in the biosynthesis of AMP from IMP. The sequence is that of Adenylosuccinate synthetase from Pediococcus pentosaceus (strain ATCC 25745 / CCUG 21536 / LMG 10740 / 183-1w).